Here is a 262-residue protein sequence, read N- to C-terminus: Putative hydro-lyase ROP_32680 (262 aa).

The protein belongs to the D-glutamate cyclase family.

The polypeptide is Putative hydro-lyase ROP_32680 (Rhodococcus opacus (strain B4)).